The chain runs to 448 residues: F-box/FBD/LRR-repeat protein At2g04230 (448 aa).

In terms of domain architecture, F-box spans 12–64 (EDRISDLPDALLLQILSSLPTENAIATSVLSKRWRSLWTMLPKLKFDSNFNPV). LRR repeat units lie at residues 72-98 (PTMF…HLSF), 149-176 (ILKL…YLDQ), 177-202 (VHFK…VVHR), 204-225 (SNAD…TIED), 226-251 (LRQE…NING), 271-296 (ISNV…ILHL), and 319-345 (THER…KLTD). The 52-residue stretch at 359-410 (KWNPPKCAPECLLFHLETFLWIGYEWQRGDEKEVATYILENARRLKKATFST) folds into the FBD domain.

The polypeptide is F-box/FBD/LRR-repeat protein At2g04230 (Arabidopsis thaliana (Mouse-ear cress)).